Here is a 301-residue protein sequence, read N- to C-terminus: Negative regulator of the PHO system (301 aa).

The Protein kinase domain occupies 7–297 (FKQLERLGNG…AQQALSHPLF (291 aa)). Residues 13–21 (LGNGTYATV) and lysine 36 each bind ATP. The active-site Proton acceptor is aspartate 133.

It belongs to the protein kinase superfamily. CMGC Ser/Thr protein kinase family. CDC2/CDKX subfamily. As to quaternary structure, interacts with a number of cyclins.

It carries out the reaction L-seryl-[protein] + ATP = O-phospho-L-seryl-[protein] + ADP + H(+). The enzyme catalyses L-threonyl-[protein] + ATP = O-phospho-L-threonyl-[protein] + ADP + H(+). In terms of biological role, when phosphate concentrations are high it phosphorylates the PHO4 transcription factor thus establishing repression. This chain is Negative regulator of the PHO system (PHO85), found in Eremothecium gossypii (strain ATCC 10895 / CBS 109.51 / FGSC 9923 / NRRL Y-1056) (Yeast).